The chain runs to 101 residues: U-scoloptoxin(10)-Sm2a (101 aa).

An N-terminal signal peptide occupies residues 1 to 23 (MNKSMIILCAVLFLTYIIEENEA).

The protein belongs to the scoloptoxin-10 family. Contains 3 disulfide bonds. As to expression, expressed by the venom gland.

Its subcellular location is the secreted. The sequence is that of U-scoloptoxin(10)-Sm2a from Scolopendra morsitans (Tanzanian blue ringleg centipede).